A 139-amino-acid chain; its full sequence is Glutamate mutase sigma subunit (139 aa).

Residues 4–139 (KIKLVLGVIG…DLHADFPDHA (136 aa)) form the B12-binding domain. Residues 14-18 (SDCHA), His-17, 62-64 (SSL), and 94-98 (NIVVG) each bind adenosylcob(III)alamin.

The protein belongs to the methylaspartate mutase GlmS subunit family. In terms of assembly, heterotetramer composed of 2 epsilon subunits (GlmE) and 2 sigma subunits (GlmS). GlmE exists as a homodimer and GlmS as a monomer. Adenosylcob(III)alamin is required as a cofactor.

The enzyme catalyses (2S,3S)-3-methyl-L-aspartate = L-glutamate. The protein operates within amino-acid degradation; L-glutamate degradation via mesaconate pathway; acetate and pyruvate from L-glutamate: step 1/4. Functionally, catalyzes the carbon skeleton rearrangement of L-glutamate to L-threo-3-methylaspartate ((2S,3S)-3-methylaspartate). This chain is Glutamate mutase sigma subunit, found in Treponema denticola (strain ATCC 35405 / DSM 14222 / CIP 103919 / JCM 8153 / KCTC 15104).